The following is a 672-amino-acid chain: Hydroxyproline O-galactosyltransferase GALT5 (672 aa).

Residues 1–28 (MKKPKLSKVEKIDKIDLFSSLWKQRSVR) are Cytoplasmic-facing. Residues 29–49 (VIMAIGFLYLVIVSVEIPLVF) traverse the membrane as a helical; Signal-anchor for type II membrane protein segment. Topologically, residues 50–672 (KSWSSSSVPL…QNKPECCNMR (623 aa)) are lumenal. The 202-residue stretch at 191 to 392 (KLMELPCGLT…DIDVHSVFVA (202 aa)) folds into the Galectin domain. 2 N-linked (GlcNAc...) asparagine glycosylation sites follow: Asn-306 and Asn-620.

Belongs to the glycosyltransferase 31 family. Mn(2+) serves as cofactor. As to expression, expressed in juvenile leaves, stems, cauline leaves and siliques.

The protein localises to the golgi apparatus membrane. The protein operates within protein modification; protein glycosylation. Possesses hydroxyproline O-galactosyltransferase activity. Transfers galactose from UDP-galactose to hydroxyproline residues in the arabinogalactan proteins (AGPs). Is specific for AGPs containing non-contiguous peptidyl hydroxyproline residues. Utilizes UDP-galactose solely as sugar donor. The addition of galactose onto the peptidyl hydroxyproline residues in AGP core proteins represents the first committed step in arabinogalactan polysaccharide addition. AGP glycans play essential roles in both vegetative and reproductive plant growth. The polypeptide is Hydroxyproline O-galactosyltransferase GALT5 (Arabidopsis thaliana (Mouse-ear cress)).